A 282-amino-acid polypeptide reads, in one-letter code: Putative phosphatase MPN_383 (282 aa).

The active-site Nucleophile is the aspartate 11. Aspartate 11 provides a ligand contact to Mg(2+). Phosphate is bound at residue leucine 12. Mg(2+) is bound at residue aspartate 13. Phosphate contacts are provided by residues 45–46 (TG) and lysine 207. A Mg(2+)-binding site is contributed by aspartate 230. Phosphate is bound at residue asparagine 233.

It belongs to the HAD-like hydrolase superfamily. Cof family. The cofactor is Mg(2+).

In Mycoplasma pneumoniae (strain ATCC 29342 / M129 / Subtype 1) (Mycoplasmoides pneumoniae), this protein is Putative phosphatase MPN_383.